The chain runs to 526 residues: MRLAAFSLFLAPLLLAQPAAAATLSVCTEASPEGFDVVQYNSLTTTNASADVLMNRLVEFDAGKGTVVPSLAERWSVSDDGLSYRFDLRQGVHFHSTAYFKPSRTLDADDVVFSFQRMLDPANPWHKVAQNGFPHAQSMQLPELIKRVEKSGDHQVLIVLDHPDATFLPMLSMGFASIYSAEYADQLMKAGTPEKLNTAPIGSGPFVFKRFQKDAVVRYAANPEYFAGKPAVDALIFAITPDANVRLQKLRRGECQIALSPKPLDVESARKDASLKVEQTPAFMTAFVALNTQHPPLDDPKVRQAINLAFDRTSYLQAVFEGSASAATGIYPPNTWSYARDIPAYPHDPEQARKLLAGKQLPELNIWTRPSGSLLNPNPSLGAQLLQADLAEAGIKANIRVIEWGELIRRAKNGEHDLLFMGWAGDNGDPDNFLTPQFSCASVKSGLNFARYCDPGLDKLIADGKAASSQEQRTGLYHQAQKLIHEQALWLPLAHPTAFALTRQEVQGYQVNPFGRQDFSRVAVKR.

A signal peptide spans Met-1 to Ala-21.

It belongs to the bacterial solute-binding protein 5 family. As to quaternary structure, the complex is composed of two ATP-binding proteins (DppD and DppF), two transmembrane proteins (DppB and DppC) and a solute-binding protein (DppA5). Five orthologous SBPs (DppA1-A5) are present in P.aeruginosa, which increases the substrate specificity of the DppBCDF transporter.

Functionally, part of the ABC transporter DppABCDF involved in the uptake of various di/tripeptides. The protein is Probable di/tripeptide-binding protein 5 of Pseudomonas aeruginosa (strain UCBPP-PA14).